We begin with the raw amino-acid sequence, 250 residues long: Doublesex- and mab-3-related transcription factor dmd-3 (250 aa).

The segment at residues 19–68 (CQRCLNHGLREKRKNHKLSCTFRFCQCSNCIMVERRRQLNSRLMQIDGSR) is a DNA-binding region (DM 1). A compositionally biased stretch (polar residues) spans 90-100 (CTSQSETTNES). The segment at 90 to 115 (CTSQSETTNESSGEDKDDGKPKERRP) is disordered. Over residues 102–115 (GEDKDDGKPKERRP) the composition is skewed to basic and acidic residues. A DNA-binding region (DM 2) is located at residues 117–164 (CQRCAQHSVVNRLKGHKRACPFRDCFCAKCQVVVERQKLMADQIKLRR). A disordered region spans residues 166-201 (QKREKNNLNSEREAPIAHSMTPSPIDTVTTTTTPTS). Positions 169-180 (EKNNLNSEREAP) are enriched in basic and acidic residues. The span at 186-201 (TPSPIDTVTTTTTPTS) shows a compositional bias: low complexity.

This sequence belongs to the DMRT family. In males, expressed in the tail tip. Specifically, expressed in 15 male-specific muscles of the tail tip called the diagonal muscles, and also in core body muscles of both males and hermaphrodites. In males, expressed in ray A-neurons. In males, expressed in PHC sensory neurons. In males, it is also expressed in the hindgut, B lineage and somatic gonad. In hermaphrodites, expressed in the anchor cell only.

The protein resides in the nucleus. It localises to the perikaryon. Its function is as follows. Transcriptional activator which promotes male-specific development. Acts partially redundantly with the transcription factor mab-3 to coordinate tail tip cell fusion and retraction and thereby regulate male tail tip morphogenesis. This is most likely through the regulation of downstream effectors such as eff-1. May also negatively regulate the expression of other proteins implicated in male tail morphogenesis including nhr-25, vav-1 and arl-1 in tail tip cells. In males, plays a role in the development of ray A-neurons by negatively regulating the activity of the transcription factor ast-1. Plays a role in the male-specific differentiation of PHC sensory neurons into densely connected hub sensory neurons. Plays a role in male mating behavior. In Caenorhabditis elegans, this protein is Doublesex- and mab-3-related transcription factor dmd-3.